A 66-amino-acid polypeptide reads, in one-letter code: Moricin-2 (66 aa).

The signal sequence occupies residues 1–24 (MNILKLFFVFIVAMSLVSCSTAAP).

Expressed in fat body and to a lesser extent in hemocyte and Malpighian tubules.

The protein resides in the secreted. Its function is as follows. Has antibacterial activity against Gram-positive and Gram-negative bacteria. Probably acts by disturbing membrane functions with its amphipathic structure. The polypeptide is Moricin-2 (MOR2) (Bombyx mori (Silk moth)).